Consider the following 579-residue polypeptide: UPF0329 protein ECU06_1620 (579 aa).

Disordered regions lie at residues 325–360 (EEKAKGRKDGKKKSVNVSEVKEEESETEEVEAGEEA) and 370–389 (ARRKTGKKSRGGRKRYKIHK). The segment covering 329–338 (KGRKDGKKKS) has biased composition (basic residues). Over residues 345–360 (KEEESETEEVEAGEEA) the composition is skewed to acidic residues.

Belongs to the UPF0329 family.

The protein is UPF0329 protein ECU06_1620 of Encephalitozoon cuniculi (strain GB-M1) (Microsporidian parasite).